The sequence spans 370 residues: Histidinol-phosphate aminotransferase 2 (370 aa).

Position 230 is an N6-(pyridoxal phosphate)lysine (Lys-230).

It belongs to the class-II pyridoxal-phosphate-dependent aminotransferase family. Histidinol-phosphate aminotransferase subfamily. In terms of assembly, homodimer. The cofactor is pyridoxal 5'-phosphate.

The catalysed reaction is L-histidinol phosphate + 2-oxoglutarate = 3-(imidazol-4-yl)-2-oxopropyl phosphate + L-glutamate. The protein operates within amino-acid biosynthesis; L-histidine biosynthesis; L-histidine from 5-phospho-alpha-D-ribose 1-diphosphate: step 7/9. The polypeptide is Histidinol-phosphate aminotransferase 2 (Pseudomonas fluorescens (strain ATCC BAA-477 / NRRL B-23932 / Pf-5)).